We begin with the raw amino-acid sequence, 57 residues long: Insulin (57 aa).

Cystine bridges form between cysteine 12-cysteine 43, cysteine 24-cysteine 56, and cysteine 42-cysteine 47.

Belongs to the insulin family. As to quaternary structure, heterodimer of a B chain and an A chain linked by two disulfide bonds.

It localises to the secreted. Insulin decreases blood glucose concentration. It increases cell permeability to monosaccharides, amino acids and fatty acids. It accelerates glycolysis, the pentose phosphate cycle, and glycogen synthesis in liver. The protein is Insulin (ins) of Lampetra fluviatilis (European river lamprey).